We begin with the raw amino-acid sequence, 463 residues long: Fumarate hydratase class II (463 aa).

Residues 95-97 (SGT), 126-129 (HPND), 136-138 (SSN), and threonine 184 contribute to the substrate site. Catalysis depends on histidine 185, which acts as the Proton donor/acceptor. The active site involves serine 315. Substrate is bound by residues serine 316 and 321-323 (KIN).

It belongs to the class-II fumarase/aspartase family. Fumarase subfamily. Homotetramer.

The protein resides in the cytoplasm. It catalyses the reaction (S)-malate = fumarate + H2O. It functions in the pathway carbohydrate metabolism; tricarboxylic acid cycle; (S)-malate from fumarate: step 1/1. In terms of biological role, involved in the TCA cycle. Catalyzes the stereospecific interconversion of fumarate to L-malate. The sequence is that of Fumarate hydratase class II from Chlamydia trachomatis serovar D (strain ATCC VR-885 / DSM 19411 / UW-3/Cx).